A 527-amino-acid polypeptide reads, in one-letter code: Amine oxidase [flavin-containing] A (527 aa).

M1 carries the N-acetylmethionine modification. The Cytoplasmic portion of the chain corresponds to 1–497; that stretch reads MESLQKTSDA…PSFWERNLPS (497 aa). S383 is subject to Phosphoserine. C406 carries the S-8alpha-FAD cysteine modification. The helical; Anchor for type IV membrane protein transmembrane segment at 498 to 518 threads the bilayer; the sequence is VSGLLKIVGFSTSITALWFVM. Over 519–527 the chain is Mitochondrial intermembrane; the sequence is YRFRLLSRS. The segment at 520–522 is interaction with membrane phospholipid headgroups; it reads RFR.

Belongs to the flavin monoamine oxidase family. As to quaternary structure, monomer, homo- or heterodimer (containing two subunits of similar size). Each subunit contains a covalently bound flavin. Enzymatically active as monomer. Requires FAD as cofactor.

It localises to the mitochondrion outer membrane. The catalysed reaction is a secondary aliphatic amine + O2 + H2O = a primary amine + an aldehyde + H2O2. The enzyme catalyses a primary methyl amine + O2 + H2O = an aldehyde + H2O2 + NH4(+). It catalyses the reaction (R)-adrenaline + O2 + H2O = (R)-3,4-dihydroxymandelaldehyde + methylamine + H2O2. It carries out the reaction dopamine + O2 + H2O = 3,4-dihydroxyphenylacetaldehyde + H2O2 + NH4(+). The catalysed reaction is tyramine + O2 + H2O = (4-hydroxyphenyl)acetaldehyde + H2O2 + NH4(+). The enzyme catalyses (R)-noradrenaline + O2 + H2O = (R)-3,4-dihydroxymandelaldehyde + H2O2 + NH4(+). It catalyses the reaction serotonin + O2 + H2O = (5-hydroxyindol-3-yl)acetaldehyde + H2O2 + NH4(+). It carries out the reaction kynuramine + O2 + H2O = 3-(2-aminophenyl)-3-oxopropanal + H2O2 + NH4(+). The catalysed reaction is tryptamine + O2 + H2O = indole-3-acetaldehyde + H2O2 + NH4(+). The enzyme catalyses 2-phenylethylamine + O2 + H2O = 2-phenylacetaldehyde + H2O2 + NH4(+). Catalyzes the oxidative deamination of primary and some secondary amine such as neurotransmitters, with concomitant reduction of oxygen to hydrogen peroxide and has important functions in the metabolism of neuroactive and vasoactive amines in the central nervous system and peripheral tissues. Preferentially oxidizes serotonin. Also catalyzes the oxidative deamination of kynuramine to 3-(2-aminophenyl)-3-oxopropanal that can spontaneously condense to 4-hydroxyquinoline. The protein is Amine oxidase [flavin-containing] A of Bos taurus (Bovine).